The following is a 108-amino-acid chain: Glutaredoxin (108 aa).

Residues 3 to 103 form the Glutaredoxin domain; that stretch reads LAKAKEIVSG…PLLTEAGAIA (101 aa). Cysteine 23 and cysteine 26 are joined by a disulfide.

Belongs to the glutaredoxin family. CPYC subfamily.

The protein resides in the cytoplasm. Has a glutathione-disulfide oxidoreductase activity in the presence of NADPH and glutathione reductase. Reduces low molecular weight disulfides and proteins. The chain is Glutaredoxin from Solanum lycopersicum (Tomato).